A 359-amino-acid chain; its full sequence is UDP-N-acetylglucosamine--N-acetylmuramyl-(pentapeptide) pyrophosphoryl-undecaprenol N-acetylglucosamine transferase (359 aa).

UDP-N-acetyl-alpha-D-glucosamine-binding positions include 15-17 (TGG), N127, R166, S191, I245, 264-269 (ALTVSE), and Q290.

The protein belongs to the glycosyltransferase 28 family. MurG subfamily.

It localises to the cell inner membrane. The catalysed reaction is di-trans,octa-cis-undecaprenyl diphospho-N-acetyl-alpha-D-muramoyl-L-alanyl-D-glutamyl-meso-2,6-diaminopimeloyl-D-alanyl-D-alanine + UDP-N-acetyl-alpha-D-glucosamine = di-trans,octa-cis-undecaprenyl diphospho-[N-acetyl-alpha-D-glucosaminyl-(1-&gt;4)]-N-acetyl-alpha-D-muramoyl-L-alanyl-D-glutamyl-meso-2,6-diaminopimeloyl-D-alanyl-D-alanine + UDP + H(+). It functions in the pathway cell wall biogenesis; peptidoglycan biosynthesis. Its function is as follows. Cell wall formation. Catalyzes the transfer of a GlcNAc subunit on undecaprenyl-pyrophosphoryl-MurNAc-pentapeptide (lipid intermediate I) to form undecaprenyl-pyrophosphoryl-MurNAc-(pentapeptide)GlcNAc (lipid intermediate II). This is UDP-N-acetylglucosamine--N-acetylmuramyl-(pentapeptide) pyrophosphoryl-undecaprenol N-acetylglucosamine transferase from Pseudomonas putida (strain W619).